We begin with the raw amino-acid sequence, 138 residues long: ATP synthase epsilon chain (138 aa).

The protein belongs to the ATPase epsilon chain family. F-type ATPases have 2 components, CF(1) - the catalytic core - and CF(0) - the membrane proton channel. CF(1) has five subunits: alpha(3), beta(3), gamma(1), delta(1), epsilon(1). CF(0) has three main subunits: a, b and c.

The protein resides in the cell membrane. Functionally, produces ATP from ADP in the presence of a proton gradient across the membrane. This Buchnera aphidicola subsp. Acyrthosiphon pisum (strain APS) (Acyrthosiphon pisum symbiotic bacterium) protein is ATP synthase epsilon chain (atpC).